A 1066-amino-acid polypeptide reads, in one-letter code: E3 ubiquitin-protein ligase PDZRN3 (1066 aa).

Residues 18-56 (CALCHKVLEDPLTTPCGHVFCAGCVLPWVVQEGSCPARC) form an RING-type; degenerate zinc finger. The TRAF-type zinc-finger motif lies at 100 to 158 (EHLERCDFAPARCRHAGCGQVLLRRDVEAHMRDACDARPVGRCQEGCGLPLTHGEQRAG). PDZ domains are found at residues 249-339 (TLVL…LRRT) and 419-503 (EVDL…IARP). Ser427 is modified (phosphoserine). The tract at residues 545 to 603 (QKKHDEDGGTTDTATILSNQHEKDSGVGRTDESTRNDESSEQENNGDDATASSNPLAGQ) is disordered. Over residues 554 to 563 (TTDTATILSN) the composition is skewed to polar residues. The segment covering 564 to 582 (QHEKDSGVGRTDESTRNDE) has biased composition (basic and acidic residues). Over residues 594–603 (TASSNPLAGQ) the composition is skewed to polar residues. Positions 679–704 (ESVDKELELLNEELRSIELECLSIVR) form a coiled coil. A compositionally biased stretch (basic and acidic residues) spans 744-754 (TELPEKSDKDS). Disordered regions lie at residues 744 to 778 (TELPEKSDKDSSSAYNTGESCRSTPLTLEISPDNS) and 808 to 863 (LLSI…LPSY). 2 stretches are compositionally biased toward polar residues: residues 755–769 (SSAYNTGESCRSTPL) and 845–855 (GSRSPTPSQKL). Positions 975–1025 (KEERKQHLVKAKEQRRRREFMMQSRLDCLKEQQAADDRKEMNILELSHKKM) form a coiled coil.

As to quaternary structure, interacts with NLGN1 and EFNB2. Interacts with UBE2D2 and with MUSK via the first PDZ domain. Post-translationally, auto-ubiquitinated. In terms of tissue distribution, widely expressed, including in the heart, skeletal muscle and liver and, at lower levels, in the brain, colon, small intestine, placenta and lung. Down-regulated in ovarian serous papillary tumors.

The protein localises to the synapse. It is found in the cytoplasm. It catalyses the reaction S-ubiquitinyl-[E2 ubiquitin-conjugating enzyme]-L-cysteine + [acceptor protein]-L-lysine = [E2 ubiquitin-conjugating enzyme]-L-cysteine + N(6)-ubiquitinyl-[acceptor protein]-L-lysine.. It participates in protein modification; protein ubiquitination. Its function is as follows. E3 ubiquitin-protein ligase. Plays an important role in regulating the surface level of MUSK on myotubes. Mediates the ubiquitination of MUSK, promoting its endocytosis and lysosomal degradation. Might contribute to terminal myogenic differentiation. The chain is E3 ubiquitin-protein ligase PDZRN3 (PDZRN3) from Homo sapiens (Human).